The sequence spans 430 residues: Na(+)/H(+) antiporter NhaA 2 (430 aa).

Helical transmembrane passes span 11–31 (FVHG…IAFI), 60–80 (LSLE…LVGL), 97–117 (VALA…LYTA), 127–147 (GWGV…ALLG), 181–201 (LNLT…YAGW), 215–235 (VLLW…GVLL), 288–308 (HALH…TNAG), 309–329 (VPVA…GLLL), 356–376 (WGHM…SLFV), and 393–413 (GVLL…LLGI).

The protein belongs to the NhaA Na(+)/H(+) (TC 2.A.33) antiporter family.

It is found in the cell membrane. The catalysed reaction is Na(+)(in) + 2 H(+)(out) = Na(+)(out) + 2 H(+)(in). In terms of biological role, na(+)/H(+) antiporter that extrudes sodium in exchange for external protons. The sequence is that of Na(+)/H(+) antiporter NhaA 2 from Deinococcus geothermalis (strain DSM 11300 / CIP 105573 / AG-3a).